Here is a 359-residue protein sequence, read N- to C-terminus: Tyrosine-protein phosphatase non-receptor type 7 (359 aa).

Residues 1–33 (MVQACEGRSRAQLPTLSLGADMTQPPPTKAPAK) are disordered. The segment at 38-51 (LQERRGSSVALMLD) is interaction with MAP kinases. At S44 the chain carries Phosphoserine. Phosphothreonine is present on T66. Phosphoserine is present on residues S93 and S143. The 253-residue stretch at 97–349 (LEEEFLKIPS…QFLHHTLALY (253 aa)) folds into the Tyrosine-protein phosphatase domain. Substrate is bound by residues D257, 290–296 (CSAGIGR), and Q334. C290 serves as the catalytic Phosphocysteine intermediate. C290 is subject to Cysteine sulfenic acid (-SOH).

Belongs to the protein-tyrosine phosphatase family. Non-receptor class subfamily. In terms of processing, oxidized at active site cysteine. Treatment with pervanadate (vanadate and H(2)O(2)) or with antigen enhanced oxidation of active site cysteine. In terms of tissue distribution, expressed in bone marrow-derived mast cells.

The protein localises to the cytoplasm. The protein resides in the cytoskeleton. It catalyses the reaction O-phospho-L-tyrosyl-[protein] + H2O = L-tyrosyl-[protein] + phosphate. Inhibited upon FCER1A triggering. In terms of biological role, may play a role in the regulation of T and B-lymphocyte development and signal transduction. In Mus musculus (Mouse), this protein is Tyrosine-protein phosphatase non-receptor type 7 (Ptpn7).